A 1181-amino-acid polypeptide reads, in one-letter code: Clustered mitochondria protein homolog (1181 aa).

Residues 165–195 (AKAEALAKNEEVSEDEESEPEDDTPMKQSTQ) are disordered. Residues 176-187 (VSEDEESEPEDD) are compositionally biased toward acidic residues. In terms of domain architecture, Clu spans 379–622 (DMARNQELLS…RLAPVDIAFL (244 aa)). The tract at residues 1130-1181 (GRLARQAPKPTATHQKEAPKKASKKTKGKGKGKDDKGEKLVAELKKKKAGKR) is disordered. Residues 1150–1159 (KASKKTKGKG) are compositionally biased toward basic residues. Positions 1160–1173 (KGKDDKGEKLVAEL) are enriched in basic and acidic residues.

This sequence belongs to the CLU family. As to quaternary structure, may associate with the eukaryotic translation initiation factor 3 (eIF-3) complex.

The protein resides in the cytoplasm. In terms of biological role, mRNA-binding protein involved in proper cytoplasmic distribution of mitochondria. The chain is Clustered mitochondria protein homolog from Yarrowia lipolytica (strain CLIB 122 / E 150) (Yeast).